A 129-amino-acid chain; its full sequence is Glycine cleavage system H protein (129 aa).

A Lipoyl-binding domain is found at 24–106; that stretch reads SYTVGITEHA…FGDGWFFRVM (83 aa). The residue at position 65 (lysine 65) is an N6-lipoyllysine.

It belongs to the GcvH family. As to quaternary structure, the glycine cleavage system is composed of four proteins: P, T, L and H. It depends on (R)-lipoate as a cofactor.

In terms of biological role, the glycine cleavage system catalyzes the degradation of glycine. The H protein shuttles the methylamine group of glycine from the P protein to the T protein. In Shewanella frigidimarina (strain NCIMB 400), this protein is Glycine cleavage system H protein.